Here is a 325-residue protein sequence, read N- to C-terminus: Beta-1,3-galactosyltransferase brn (325 aa).

Residues 1–7 (MQSKHRK) are Cytoplasmic-facing. The chain crosses the membrane as a helical; Signal-anchor for type II membrane protein span at residues 8–28 (LLLRCLLVLPLILLVDYCGLL). Residues 29 to 325 (THLHELNFER…WNECRSANYA (297 aa)) lie on the Lumenal side of the membrane. 2 N-linked (GlcNAc...) asparagine glycosylation sites follow: asparagine 149 and asparagine 166.

The protein belongs to the glycosyltransferase 31 family.

Its subcellular location is the golgi apparatus membrane. The catalysed reaction is a ganglioside GM2 (d18:1(4E)) + UDP-alpha-D-galactose = a ganglioside GM1 (d18:1(4E)) + UDP + H(+). Neurogenic protein essential for the development and maintenance of epithelial structure. Required in the germline for establishing the follicular epithelium and for determining the dorsal-ventral polarity. Collaborates with Notch on the apical surface of follicle cells to mediate germline-follicle cell adhesion. Brn has a role in chorion formation. This chain is Beta-1,3-galactosyltransferase brn (brn), found in Drosophila melanogaster (Fruit fly).